The following is a 205-amino-acid chain: Small ribosomal subunit protein uS4 (205 aa).

The disordered stretch occupies residues 19–45 (IWGRPKSPVNRREYGPGQHGQRRKGKL). The S4 RNA-binding domain maps to 94 to 157 (SRLDAVVYRA…KQLAIVLEAV (64 aa)).

The protein belongs to the universal ribosomal protein uS4 family. As to quaternary structure, part of the 30S ribosomal subunit. Contacts protein S5. The interaction surface between S4 and S5 is involved in control of translational fidelity.

One of the primary rRNA binding proteins, it binds directly to 16S rRNA where it nucleates assembly of the body of the 30S subunit. In terms of biological role, with S5 and S12 plays an important role in translational accuracy. The polypeptide is Small ribosomal subunit protein uS4 (Brucella melitensis biotype 2 (strain ATCC 23457)).